The sequence spans 348 residues: [FeFe] hydrogenase maturase subunit HydE (348 aa).

Residues 49–268 form the Radical SAM core domain; the sequence is DEVHIRAIIE…LLPDSNIPAT (220 aa). [4Fe-4S] cluster-binding residues include Cys63, Cys67, and Cys70. Residues Cys311, Cys319, and Cys322 each contribute to the [2Fe-2S] cluster site.

This sequence belongs to the radical SAM superfamily. HydE family. In terms of assembly, monomer. [4Fe-4S] cluster serves as cofactor. Requires [2Fe-2S] cluster as cofactor.

In terms of biological role, required for the maturation of the [FeFe]-hydrogenase HydA. Catalyzes the reductive cleavage of S-adenosyl-L-methionine (in vitro), suggesting it may contribute to the biosynthesis of an essential sulfur-containing ligand that binds to the hydrogenase active site [2Fe-2S] cluster. This is [FeFe] hydrogenase maturase subunit HydE from Thermotoga maritima (strain ATCC 43589 / DSM 3109 / JCM 10099 / NBRC 100826 / MSB8).